Here is a 126-residue protein sequence, read N- to C-terminus: 3-aminobutyryl-CoA ammonia lyase (126 aa).

The protein belongs to the KAL family. As to quaternary structure, homohexamer.

It carries out the reaction (3S)-3-aminobutanoyl-CoA = (2E)-butenoyl-CoA + NH4(+). It participates in amino-acid degradation; L-lysine degradation via acetate pathway. In terms of biological role, involved in the anaerobic fermentation of lysine. Catalyzes the deamination of L-3-aminobutyryl-CoA to produce crotonoyl-CoA. This chain is 3-aminobutyryl-CoA ammonia lyase, found in Acetoanaerobium sticklandii (strain ATCC 12662 / DSM 519 / JCM 1433 / CCUG 9281 / NCIMB 10654 / HF) (Clostridium sticklandii).